The following is a 161-amino-acid chain: MNISLIAAISKNLVIGYKNKIPWYLPEDLKWFKQKTINKNIIMGRLTWESIKKKPLPMRKNIVISSNEIKQEGIIWADSISNAIISAQYNQEIMIIGGAKIYKEMLFYANKLYLTHIDIDIVGDAYFPEYKLYPYWKTLFRKKNTKNKMNPYNYSFEILSR.

Residues 2–161 (NISLIAAISK…YNYSFEILSR (160 aa)) enclose the DHFR domain. Residue 6–8 (IAA) coordinates substrate. Residues 7–8 (AA) and 15–20 (IGYKNK) contribute to the NADP(+) site. D28 provides a ligand contact to substrate. Residue 44 to 47 (GRLT) participates in NADP(+) binding. Residue R59 participates in substrate binding. NADP(+) contacts are provided by residues 64–66 (ISS) and 96–101 (IGGAKI). A substrate-binding site is contributed by T115.

It belongs to the dihydrofolate reductase family.

It catalyses the reaction (6S)-5,6,7,8-tetrahydrofolate + NADP(+) = 7,8-dihydrofolate + NADPH + H(+). The protein operates within cofactor biosynthesis; tetrahydrofolate biosynthesis; 5,6,7,8-tetrahydrofolate from 7,8-dihydrofolate: step 1/1. In terms of biological role, key enzyme in folate metabolism. Catalyzes an essential reaction for de novo glycine and purine synthesis, and for DNA precursor synthesis. This is Dihydrofolate reductase (folA) from Buchnera aphidicola subsp. Acyrthosiphon pisum (strain APS) (Acyrthosiphon pisum symbiotic bacterium).